The sequence spans 288 residues: Bifunctional protein FolD (288 aa).

NADP(+) contacts are provided by residues 166–168 (GAS) and I232.

The protein belongs to the tetrahydrofolate dehydrogenase/cyclohydrolase family. As to quaternary structure, homodimer.

It carries out the reaction (6R)-5,10-methylene-5,6,7,8-tetrahydrofolate + NADP(+) = (6R)-5,10-methenyltetrahydrofolate + NADPH. It catalyses the reaction (6R)-5,10-methenyltetrahydrofolate + H2O = (6R)-10-formyltetrahydrofolate + H(+). It participates in one-carbon metabolism; tetrahydrofolate interconversion. Its function is as follows. Catalyzes the oxidation of 5,10-methylenetetrahydrofolate to 5,10-methenyltetrahydrofolate and then the hydrolysis of 5,10-methenyltetrahydrofolate to 10-formyltetrahydrofolate. The polypeptide is Bifunctional protein FolD (Shigella dysenteriae serotype 1 (strain Sd197)).